A 227-amino-acid polypeptide reads, in one-letter code: Translation initiation factor 6 (227 aa).

This sequence belongs to the eIF-6 family.

Binds to the 50S ribosomal subunit and prevents its association with the 30S ribosomal subunit to form the 70S initiation complex. The protein is Translation initiation factor 6 of Methanococcus vannielii (strain ATCC 35089 / DSM 1224 / JCM 13029 / OCM 148 / SB).